Consider the following 134-residue polypeptide: Putative pre-16S rRNA nuclease (134 aa).

Belongs to the YqgF nuclease family.

It is found in the cytoplasm. Functionally, could be a nuclease involved in processing of the 5'-end of pre-16S rRNA. In Hydrogenovibrio crunogenus (strain DSM 25203 / XCL-2) (Thiomicrospira crunogena), this protein is Putative pre-16S rRNA nuclease.